A 119-amino-acid chain; its full sequence is Large ribosomal subunit protein bL19 (119 aa).

Belongs to the bacterial ribosomal protein bL19 family.

This protein is located at the 30S-50S ribosomal subunit interface and may play a role in the structure and function of the aminoacyl-tRNA binding site. The protein is Large ribosomal subunit protein bL19 of Pseudoalteromonas atlantica (strain T6c / ATCC BAA-1087).